The following is a 246-amino-acid chain: Putative protein phosphatase 2C-type (246 aa).

Positions 2–240 constitute a PPM-type phosphatase domain; that stretch reads KISLKTDIGQ…DNITIALVHN (239 aa). Mn(2+) is bound by residues Asp36, Gly37, Asp192, and Asp231.

It depends on Mg(2+) as a cofactor. Requires Mn(2+) as cofactor.

The catalysed reaction is O-phospho-L-seryl-[protein] + H2O = L-seryl-[protein] + phosphate. It carries out the reaction O-phospho-L-threonyl-[protein] + H2O = L-threonyl-[protein] + phosphate. The polypeptide is Putative protein phosphatase 2C-type (Streptococcus pyogenes serotype M6 (strain ATCC BAA-946 / MGAS10394)).